Reading from the N-terminus, the 291-residue chain is Glutamate racemase (291 aa).

Substrate-binding positions include 12–13 (DS) and 44–45 (YG). The active-site Proton donor/acceptor is Cys75. 76–77 (NT) provides a ligand contact to substrate. Residue Cys187 is the Proton donor/acceptor of the active site. Substrate is bound at residue 188 to 189 (TH). Residues 234–247 (ATQAAGARAQMAPS) are compositionally biased toward low complexity. Residues 234–257 (ATQAAGARAQMAPSAPEPKEGTPD) are disordered.

This sequence belongs to the aspartate/glutamate racemases family.

It catalyses the reaction L-glutamate = D-glutamate. It participates in cell wall biogenesis; peptidoglycan biosynthesis. Functionally, provides the (R)-glutamate required for cell wall biosynthesis. In Koribacter versatilis (strain Ellin345), this protein is Glutamate racemase.